Reading from the N-terminus, the 356-residue chain is Chorismate synthase (356 aa).

NADP(+) is bound at residue R44. Residues 121–123 (HFS), G278, 293–297 (KPTPS), and R320 contribute to the FMN site.

The protein belongs to the chorismate synthase family. Requires FMNH2 as cofactor.

It catalyses the reaction 5-O-(1-carboxyvinyl)-3-phosphoshikimate = chorismate + phosphate. It participates in metabolic intermediate biosynthesis; chorismate biosynthesis; chorismate from D-erythrose 4-phosphate and phosphoenolpyruvate: step 7/7. Functionally, catalyzes the anti-1,4-elimination of the C-3 phosphate and the C-6 proR hydrogen from 5-enolpyruvylshikimate-3-phosphate (EPSP) to yield chorismate, which is the branch point compound that serves as the starting substrate for the three terminal pathways of aromatic amino acid biosynthesis. This reaction introduces a second double bond into the aromatic ring system. The protein is Chorismate synthase of Pyrococcus abyssi (strain GE5 / Orsay).